The following is a 510-amino-acid chain: uncharacterized protein (510 aa).

Disordered stretches follow at residues 1 to 154, 208 to 227, 234 to 276, and 368 to 480; these read MGSP…ATFL, DGNH…GDLA, TRES…QGIL, and NFYT…GCPR. At Ser43 the chain carries Phosphoserine. Positions 50 to 60 are enriched in polar residues; sequence PLVSQQDTSEA. Residues 78 to 92 are compositionally biased toward basic and acidic residues; the sequence is EEERLGSPEDEKMDG. Position 84 is a phosphoserine (Ser84). Composition is skewed to polar residues over residues 97–109 and 118–135; these read SQPS…QVAN and QPSS…SNRR. A Phosphoserine modification is found at Ser120. Residues 139–151 are compositionally biased toward low complexity; the sequence is ASGSEEAKAASAA. Over residues 243-255 the composition is skewed to low complexity; the sequence is SSLLTTTRGLTSG. Basic and acidic residues predominate over residues 379 to 395; sequence RTKELQLVAKEDTDSTR. Over residues 414–441 the composition is skewed to polar residues; the sequence is SVHQEFSSGDINTRSLQDPGNSQSSGLS.

This is an uncharacterized protein from Rattus norvegicus (Rat).